The following is a 374-amino-acid chain: MDPLGPAKPQWLWRRCLAGLLFQLLVAVCFFSYLRVSQDHATGSPRPGLMVVEPVTRAPNGSRCQDSAATPAHPTLLILLWTWPFNTPVALPRCSEMVPGAADCNITANSNVYPQADAVIVHHWDIMYNPSANLLPPTRPQGQRWIWFSMESPSNCRHLEALDGYFNLTMSYRSDSDIFTPYGWLEPWSGQPAHPPLNLSAKTELVAWAVSNWKPDSARVRYYQSLKAHLKVDVYGHSHKPLPKGTMMETLSRYKFYLAFENSLHLDYITEKLWRNALEAWAVPVVLGPSRGNYERFLPPDAFIHVDDFQSPKDLARYLQELDKDHARYLSYFRWRETLRPRSFSWALDFCKACWKLQQESRYQTVRSIAAWFT.

Residues 1–15 (MDPLGPAKPQWLWRR) are Cytoplasmic-facing. The helical; Signal-anchor for type II membrane protein transmembrane segment at 16 to 34 (CLAGLLFQLLVAVCFFSYL) threads the bilayer. At 35–374 (RVSQDHATGS…TVRSIAAWFT (340 aa)) the chain is on the lumenal side. Asparagine 60, asparagine 105, asparagine 167, and asparagine 198 each carry an N-linked (GlcNAc...) asparagine glycan.

The protein belongs to the glycosyltransferase 10 family.

The protein resides in the golgi apparatus. It is found in the golgi stack membrane. It catalyses the reaction a beta-D-galactosyl-(1-&gt;3)-N-acetyl-beta-D-glucosaminyl derivative + GDP-beta-L-fucose = a beta-D-galactosyl-(1-&gt;3)-[alpha-L-fucosyl-(1-&gt;4)]-N-acetyl-beta-D-glucosaminyl derivative + GDP + H(+). The enzyme catalyses an N-acetyl-alpha-neuraminyl-(2-&gt;3)-beta-D-galactosyl-(1-&gt;4)-N-acetyl-beta-D-glucosaminyl derivative + GDP-beta-L-fucose = an alpha-Neu5Ac-(2-&gt;3)-beta-D-Gal-(1-&gt;4)-[alpha-L-Fuc-(1-&gt;3)]-beta-D-GlcNAc derivative + GDP + H(+). It carries out the reaction an alpha-Neu5Ac-(2-&gt;3)-beta-D-Gal-(1-&gt;4)-beta-D-GlcNAc-(1-&gt;3)-beta-D-Gal-(1-&gt;4)-[alpha-L-Fuc-(1-&gt;3)]-beta-D-GlcNAc derivative + GDP-beta-L-fucose = an alpha-Neu5Ac-(2-&gt;3)-beta-D-Gal-(1-&gt;4)-[alpha-L-Fuc-(1-&gt;3)]-beta-D-GlcNAc-(1-&gt;3)-beta-D-Gal-(1-&gt;4)-[alpha-L-Fuc-(1-&gt;3)]-beta-D-GlcNAc derivative + GDP + H(+). The catalysed reaction is a beta-D-galactosyl-(1-&gt;4)-N-acetyl-beta-D-glucosaminyl derivative + GDP-beta-L-fucose = a beta-D-galactosyl-(1-&gt;4)-[alpha-L-fucosyl-(1-&gt;3)]-N-acetyl-beta-D-glucosaminyl derivative + GDP + H(+). It catalyses the reaction a neolactoside nLc4Cer + GDP-beta-L-fucose = a neolactoside III(3)-alpha-Fuc-nLc4Cer + GDP + H(+). The enzyme catalyses a neolactoside nLc6Cer + GDP-beta-L-fucose = beta-D-galactosyl-(1-&gt;4)-N-acetyl-beta-D-glucosaminyl-(1-&gt;3)-beta-D-galactosyl-(1-&gt;4)-[alpha-L-fucosyl-(1-&gt;3)]-N-acetyl-beta-D-glucosaminyl-(1-&gt;3)-beta-D-galactosyl-(1-&gt;4)-beta-D-glucosyl-(1&lt;-&gt;1')-ceramide + GDP + H(+). It carries out the reaction a neolactoside nLc6Cer(d18:1(4E)) + GDP-beta-L-fucose = a neolactoside III(3)-alpha-Fuc-nLc6Cer(d18:1(4E)) + GDP + H(+). The catalysed reaction is a neolactoside nLc4Cer(d18:1(4E)) + GDP-beta-L-fucose = a neolactoside III(3)-alpha-Fuc-nLc4Cer(d18:1(4E)) + GDP + H(+). It catalyses the reaction a neolactoside VI(3)-alpha-NeuNAc-nLc6Cer + GDP-beta-L-fucose = a neolactoside VI(3)-alpha-NeuAc,III(3)-alphaFuc-nLc6Cer + GDP + H(+). The enzyme catalyses beta-D-galactosyl-(1-&gt;4)-N-acetyl-D-glucosamine + GDP-beta-L-fucose = beta-D-galactosyl-(1-&gt;4)-[alpha-L-fucosyl-(1-&gt;3)]-N-acetyl-D-glucosamine + GDP + H(+). It carries out the reaction N-acetyl-alpha-neuraminosyl-(2-&gt;3)-beta-D-galactosyl-(1-&gt;4)-N-acetyl-beta-D-glucosamine + GDP-beta-L-fucose = N-acetyl-alpha-neuraminosyl-(2-&gt;3)-beta-D-galactosyl-(1-&gt;4)-[alpha-L-fucosyl-(1-&gt;3)]-N-acetyl-beta-D-glucosamine + GDP + H(+). The catalysed reaction is alpha-L-Fuc-(1-&gt;2)-beta-D-Gal-(1-&gt;4)-D-GlcNAc + GDP-beta-L-fucose = alpha-L-Fuc-(1-&gt;2)-beta-D-Gal-(1-&gt;4)-[alpha-L-Fuc-(1-&gt;3)]-D-GlcNAc + GDP + H(+). It catalyses the reaction an alpha-Neu5Ac-(2-&gt;3)-beta-D-Gal-(1-&gt;3)-D-GlcNAc derivative + GDP-beta-L-fucose = an alpha-Neu5Ac-(2-&gt;3)-beta-D-Gal-(1-&gt;3)-[alpha-L-Fuc-(1-&gt;4)]-beta-D-GlcNAc derivative + GDP + H(+). It participates in protein modification; protein glycosylation. Its function is as follows. Catalyzes preferentially the transfer of L-fucose, from a guanosine diphosphate-beta-L-fucose, to the N-acetyl-beta-D-glucosamine (GlcNAc) of an N-acetyllactosamine unit (type 2 chain) of an oligosaccharide, or a glycoprotein- and a glycolipid-linked N-acetyllactosamine unit via an alpha (1,3) linkage and participates in the surface expression of VIM-2, Lewis X/SSEA-1 and sialyl Lewis X antigens. Preferentially transfers fucose to the GlcNAc of an internal N-acetyllactosamine unit of a poly-N-acetyllactosamine chain acceptor substrate. Also catalyzes to a lesser extend the transfer of L-fucose to the GlcNAc of a type 1 (beta-D-galactosyl-(1-&gt;3)-N-acetyl-beta-D-glucosaminyl) or H-type 1 (alpha-L-Fuc-(1-&gt;2)-beta-D-Gal-(1-&gt;3)-D-GlcNAc) chain oligosaccharide via an alpha (1,4) linkage. Preferentially catalyzes sialylated type 2 oligosaccharide acceptors over neutral type 2 or H type 2 (alpha-L-Fuc-(1-&gt;2)-beta-D-Gal-(1-&gt;4)-D-GlcNAc) oligosaccharide acceptors. Lactose-based structures are also acceptor substrates. In Gorilla gorilla gorilla (Western lowland gorilla), this protein is 4-galactosyl-N-acetylglucosaminide 3-alpha-L-fucosyltransferase FUT5.